We begin with the raw amino-acid sequence, 286 residues long: ATP synthase gamma chain (286 aa).

It belongs to the ATPase gamma chain family. As to quaternary structure, F-type ATPases have 2 components, CF(1) - the catalytic core - and CF(0) - the membrane proton channel. CF(1) has five subunits: alpha(3), beta(3), gamma(1), delta(1), epsilon(1). CF(0) has three main subunits: a, b and c.

It localises to the cell inner membrane. Produces ATP from ADP in the presence of a proton gradient across the membrane. The gamma chain is believed to be important in regulating ATPase activity and the flow of protons through the CF(0) complex. In Dechloromonas aromatica (strain RCB), this protein is ATP synthase gamma chain.